Reading from the N-terminus, the 152-residue chain is Ubiquitin-conjugating enzyme E2 1 (152 aa).

The 147-residue stretch at 4 to 150 (PARKRLMRDF…VRDVVEQSWT (147 aa)) folds into the UBC core domain. C88 serves as the catalytic Glycyl thioester intermediate. The interval 119 to 152 (NSPANSEAARMYSESKREYNRRVRDVVEQSWTAD) is disordered. Basic and acidic residues predominate over residues 131-145 (SESKREYNRRVRDVV).

This sequence belongs to the ubiquitin-conjugating enzyme family. In terms of tissue distribution, ubiquitously expressed.

It catalyses the reaction S-ubiquitinyl-[E1 ubiquitin-activating enzyme]-L-cysteine + [E2 ubiquitin-conjugating enzyme]-L-cysteine = [E1 ubiquitin-activating enzyme]-L-cysteine + S-ubiquitinyl-[E2 ubiquitin-conjugating enzyme]-L-cysteine.. It participates in protein modification; protein ubiquitination. Accepts the ubiquitin from the E1 complex and catalyzes its covalent attachment to other proteins. In Arabidopsis thaliana (Mouse-ear cress), this protein is Ubiquitin-conjugating enzyme E2 1 (UBC1).